An 813-amino-acid chain; its full sequence is Striatin-interacting protein 1 homolog (813 aa).

2 disordered regions span residues 1–41 and 307–379; these read MDGV…SEAP and RAAS…RDEV. Residues 9 to 18 are compositionally biased toward polar residues; the sequence is NNKQKQNQML. The span at 22–35 shows a compositional bias: basic and acidic residues; that stretch reads MRGEFTRNQRKDSE. Low complexity predominate over residues 307 to 316; the sequence is RAASPPASAS. Serine 310 carries the phosphoserine modification. Residues 331–352 show a composition bias toward basic and acidic residues; the sequence is KALIKQDNLDTFNEKDPYKADD. Residues 353 to 367 show a composition bias toward acidic residues; the sequence is SHEDEEENDDNDNSL.

Belongs to the STRIP family. In terms of assembly, part of the core of STRIPAK complexes composed of PP2A catalytic and scaffolding subunits, the striatins (PP2A regulatory subunits), the striatin-associated proteins MOB4, STRIP1 and STRIP2, PDCD10 and members of the STE20 kinases, such as STK24 and STK26.

It localises to the cytoplasm. In terms of biological role, plays a role in the regulation of cell morphology and cytoskeletal organization. Required in the cortical actin filament dynamics and cell shape. Part of the striatin-interacting phosphatase and kinase (STRIPAK) complexes. STRIPAK complexes have critical roles in protein (de)phosphorylation and are regulators of multiple signaling pathways including Hippo, MAPK, nuclear receptor and cytoskeleton remodeling. Different types of STRIPAK complexes are involved in a variety of biological processes such as cell growth, differentiation, apoptosis, metabolism and immune regulation. This is Striatin-interacting protein 1 homolog (strip1) from Danio rerio (Zebrafish).